The sequence spans 115 residues: DNA-binding protein NP_4416A (115 aa).

Residues M1–E11 are compositionally biased toward acidic residues. Positions M1–A46 are disordered. A compositionally biased stretch (basic and acidic residues) spans E12 to G25. Over residues Q29 to E41 the composition is skewed to low complexity.

Belongs to the PDCD5 family.

This is DNA-binding protein NP_4416A from Natronomonas pharaonis (strain ATCC 35678 / DSM 2160 / CIP 103997 / JCM 8858 / NBRC 14720 / NCIMB 2260 / Gabara) (Halobacterium pharaonis).